The primary structure comprises 382 residues: uncharacterized protein (382 aa).

This is an uncharacterized protein from Methanocaldococcus jannaschii (strain ATCC 43067 / DSM 2661 / JAL-1 / JCM 10045 / NBRC 100440) (Methanococcus jannaschii).